The sequence spans 533 residues: Na(+)/H(+) antiporter NhaB (533 aa).

11 consecutive transmembrane segments (helical) span residues 10–30 (IGNF…SFLI), 67–87 (PGGL…SQVL), 98–118 (LLLV…LFVF), 131–165 (VSLL…FYSI), 209–229 (LLMH…VGEP), 247–267 (IRMS…CFIV), 310–330 (AFVG…VGLI), 355–375 (EEAL…AVII), 396–416 (LVIF…VFVG), 454–474 (ATPN…APLI), and 481–501 (MVWM…MAIQ).

Belongs to the NhaB Na(+)/H(+) (TC 2.A.34) antiporter family.

The protein resides in the cell inner membrane. It carries out the reaction 2 Na(+)(in) + 3 H(+)(out) = 2 Na(+)(out) + 3 H(+)(in). Na(+)/H(+) antiporter that extrudes sodium in exchange for external protons. This is Na(+)/H(+) antiporter NhaB from Shewanella sp. (strain ANA-3).